Here is a 624-residue protein sequence, read N- to C-terminus: MWSILSIKRSTSRMELMCLNAAECPINVFPEQQRNMPTESLNPGTVLIVGGGPVGLITATTLAKYGVRSVILERNLTTTKWPKMDLTNSRSMEIYQRLGIADALRNVAVPSHYPFTCLFSSGLHADKAITAWDLPSPDEYRRRIREQNDGSMPSEPWLRVSQEIFEAWLKELGMENPLIDFRAGWKVKGARELDHGVEVEAIHSDTGEVWKVSADFVIGCDGAHSAIRKSLEIPLDGGPIHGYAVLVHFKSRDLSRIQKQGQFWHLFFPNAASDGGSIKGAVIAQDEVDTWTVHRFMRPDVDHTQLSSEEIVYDLLGGMGGQPFPIRIDEVLVRSTWTPSVALARSYAGPKHRIFIAGDACHQTVPTGGYGMNTGIADGYDIGWKLAAVIQGWAGPATLLSYEKERRPVGELALQWSKVHMGNLMKMSAELGLDAHMIELNNETGAELRGAMHSYLQTHDGHNQSIGVEMGYRYVSNICVPGALDAELSPPEFHPRKYTPCTMPGYRAPHVYLTTGTPVSRLFGDGFTLVAFPEGEGLNASTEQLREAARKKALPLEVVELPGEMHAHEVWGASLVLVRPDGFVSWHGDSVRSQEEADRIIAQASGFDSEHLGNHVQAQERSAL.

FAD-binding residues include Glu73 and Asp359.

The protein belongs to the paxM FAD-dependent monooxygenase family. It depends on FAD as a cofactor.

The protein operates within secondary metabolite biosynthesis. Its function is as follows. FAD-dependent monooxygenase; part of the gene cluster that mediates the biosynthesis of aspyridones. The polyketide-amino acid backbone preaspyridone A is first assembled by the PKS-NRPS hybrid apdA. The assembly of preaspyridone A is initiated by loading of malonyl-CoA onto apdA, followed by decarboxylation to yield the acetyl starter unit. The growing polyketide chain then elongates into a tetraketide. The adpA PKS module catalyzes three Claisen condensations, as well as beta-keto processing and methylation. Alpha-methylation step during polyketide synthesis is a prerequisite and a key checkpoint for chain transfer between PKS and NRPS modules. The downstream NRPS module contains the condensation (C), adenylation (A), and thiolation (T) domains and catalyzes the incorporation of tyrosine via the formation of the L-tyrosinyl-thioester and the amide linkage between L-tyrosinyl-thioester and the tetraketide. The bimodular assembly line is terminated with a reductase (R) domain that facilitates formation and release of the tetramic acid product. Because apdA lacks a designated enoylreductase (ER) domain, the required activity is provided the enoyl reductase apdC. ApdC appears to operate with different stereoselectivity in different PKS cycle. Combined with apdC, apdA is proposed to synthesize preaspyridone A via about 20 enzymatic steps. A number of oxidative steps performed successively by the cytochrome P450 monooxygenases apdE and apdB are required for the conversion of preaspyridone A to aspyridone A. The cytochrome P450 monooxygenase apdE is responsible for the oxidative dephenylation of preaspyridone A. Finally, the predicted FAD-dependent monooxygenase apdD and the acyl-CoA dehydrogenase apdG may be involved in the transformation of aspyridone A into aspyridone B. The chain is FAD-dependent monooxygenase apdD from Emericella nidulans (strain FGSC A4 / ATCC 38163 / CBS 112.46 / NRRL 194 / M139) (Aspergillus nidulans).